The chain runs to 530 residues: Bifunctional purine biosynthesis protein PurH (530 aa).

In terms of domain architecture, MGS-like spans 1-148 (MNNARPIRRA…KNHKDVTIVV (148 aa)).

Belongs to the PurH family.

The enzyme catalyses (6R)-10-formyltetrahydrofolate + 5-amino-1-(5-phospho-beta-D-ribosyl)imidazole-4-carboxamide = 5-formamido-1-(5-phospho-D-ribosyl)imidazole-4-carboxamide + (6S)-5,6,7,8-tetrahydrofolate. The catalysed reaction is IMP + H2O = 5-formamido-1-(5-phospho-D-ribosyl)imidazole-4-carboxamide. It participates in purine metabolism; IMP biosynthesis via de novo pathway; 5-formamido-1-(5-phospho-D-ribosyl)imidazole-4-carboxamide from 5-amino-1-(5-phospho-D-ribosyl)imidazole-4-carboxamide (10-formyl THF route): step 1/1. Its pathway is purine metabolism; IMP biosynthesis via de novo pathway; IMP from 5-formamido-1-(5-phospho-D-ribosyl)imidazole-4-carboxamide: step 1/1. In Vibrio vulnificus (strain YJ016), this protein is Bifunctional purine biosynthesis protein PurH.